We begin with the raw amino-acid sequence, 594 residues long: UvrABC system protein C (594 aa).

One can recognise a GIY-YIG domain in the interval 14-91 (DQPGCYLMKD…IKKYDPKYNI (78 aa)). In terms of domain architecture, UVR spans 196–231 (KEVRSELEIKMYEASEKLEFERAKELRDQIAHIDAI).

This sequence belongs to the UvrC family. As to quaternary structure, interacts with UvrB in an incision complex.

Its subcellular location is the cytoplasm. Its function is as follows. The UvrABC repair system catalyzes the recognition and processing of DNA lesions. UvrC both incises the 5' and 3' sides of the lesion. The N-terminal half is responsible for the 3' incision and the C-terminal half is responsible for the 5' incision. This Bacillus cereus (strain B4264) protein is UvrABC system protein C.